We begin with the raw amino-acid sequence, 106 residues long: Large ribosomal subunit protein bL21 (106 aa).

This sequence belongs to the bacterial ribosomal protein bL21 family. In terms of assembly, part of the 50S ribosomal subunit. Contacts protein L20.

This protein binds to 23S rRNA in the presence of protein L20. The sequence is that of Large ribosomal subunit protein bL21 from Streptomyces coelicolor (strain ATCC BAA-471 / A3(2) / M145).